The sequence spans 184 residues: ATP synthase subunit delta (184 aa).

It belongs to the ATPase delta chain family. F-type ATPases have 2 components, F(1) - the catalytic core - and F(0) - the membrane proton channel. F(1) has five subunits: alpha(3), beta(3), gamma(1), delta(1), epsilon(1). F(0) has three main subunits: a(1), b(2) and c(10-14). The alpha and beta chains form an alternating ring which encloses part of the gamma chain. F(1) is attached to F(0) by a central stalk formed by the gamma and epsilon chains, while a peripheral stalk is formed by the delta and b chains.

It is found in the cell inner membrane. In terms of biological role, f(1)F(0) ATP synthase produces ATP from ADP in the presence of a proton or sodium gradient. F-type ATPases consist of two structural domains, F(1) containing the extramembraneous catalytic core and F(0) containing the membrane proton channel, linked together by a central stalk and a peripheral stalk. During catalysis, ATP synthesis in the catalytic domain of F(1) is coupled via a rotary mechanism of the central stalk subunits to proton translocation. Its function is as follows. This protein is part of the stalk that links CF(0) to CF(1). It either transmits conformational changes from CF(0) to CF(1) or is implicated in proton conduction. This is ATP synthase subunit delta from Zymomonas mobilis subsp. mobilis (strain ATCC 31821 / ZM4 / CP4).